Consider the following 129-residue polypeptide: Transcriptional activator protein (129 aa).

Positions 13-28 (KAQHKIAKRRAVRRRR) match the Nuclear localization signal motif. A zinc finger lies at 33–50 (CGCSIFLHINCADNGFTH). Positions 73 to 109 (IFQDTTRRGPVVHQNQDLPHPSPVQPQPTESIGSPQS) are disordered. A Phosphoserine; by host modification is found at serine 109. Positions 115 to 129 (SLDDFDESFWADIFK) are transactivation.

This sequence belongs to the geminiviridae transcriptional activator protein family. In terms of assembly, monomer. Homodimer. Homooligomer. Self-interaction correlates with nuclear localization and efficient activation of transcription. Monomers suppress local silencing by interacting with and inactivating host adenosine kinase 2 (ADK2) in the cytoplasm. Interacts with and inhibits host SNF1 kinase. Binds to ssDNA. In terms of processing, phosphorylated at Ser-109 by A.thaliana KIN10.

The protein resides in the host nucleus. It localises to the host cytoplasm. Strong activator of the late viral genes promoters. Enhances the expression of the capsid protein and nuclear shuttle protein. Acts as a suppressor of RNA-mediated gene silencing, also known as post-transcriptional gene silencing (PTGS), a mechanism of plant viral defense that limits the accumulation of viral RNAs. Suppresses the host RNA silencing by inhibiting adenosine kinase 2 (ADK2), a kinase involved in a general methylation pathway. Also suppresses the host basal defense by interacting with and inhibiting SNF1 kinase, a key regulator of cell metabolism implicated in innate antiviral defense. Determines pathogenicity. The polypeptide is Transcriptional activator protein (Cabbage leaf curl virus (isolate Jamaica) (CaLCuV)).